Reading from the N-terminus, the 363-residue chain is UDP-N-acetylglucosamine--N-acetylmuramyl-(pentapeptide) pyrophosphoryl-undecaprenol N-acetylglucosamine transferase (363 aa).

Residues 10–12 (TGG), Asn-124, Ser-195, Ile-249, and Gln-294 contribute to the UDP-N-acetyl-alpha-D-glucosamine site.

It belongs to the glycosyltransferase 28 family. MurG subfamily.

It is found in the cell membrane. It carries out the reaction Mur2Ac(oyl-L-Ala-gamma-D-Glu-L-Lys-D-Ala-D-Ala)-di-trans,octa-cis-undecaprenyl diphosphate + UDP-N-acetyl-alpha-D-glucosamine = beta-D-GlcNAc-(1-&gt;4)-Mur2Ac(oyl-L-Ala-gamma-D-Glu-L-Lys-D-Ala-D-Ala)-di-trans,octa-cis-undecaprenyl diphosphate + UDP + H(+). Its pathway is cell wall biogenesis; peptidoglycan biosynthesis. Its function is as follows. Cell wall formation. Catalyzes the transfer of a GlcNAc subunit on undecaprenyl-pyrophosphoryl-MurNAc-pentapeptide (lipid intermediate I) to form undecaprenyl-pyrophosphoryl-MurNAc-(pentapeptide)GlcNAc (lipid intermediate II). This Leuconostoc mesenteroides subsp. mesenteroides (strain ATCC 8293 / DSM 20343 / BCRC 11652 / CCM 1803 / JCM 6124 / NCDO 523 / NBRC 100496 / NCIMB 8023 / NCTC 12954 / NRRL B-1118 / 37Y) protein is UDP-N-acetylglucosamine--N-acetylmuramyl-(pentapeptide) pyrophosphoryl-undecaprenol N-acetylglucosamine transferase.